The primary structure comprises 337 residues: Protein ABHD13 (337 aa).

Residues 37–57 (FHLYGGIVLLLLIFVSIAGIL) form a helical; Signal-anchor for type II membrane protein membrane-spanning segment. Residues Ser193, Asp268, and His298 each act as charge relay system in the active site. Asn299 is a glycosylation site (N-linked (GlcNAc...) asparagine).

It belongs to the serine esterase family.

It is found in the membrane. The chain is Protein ABHD13 from Mus musculus (Mouse).